The following is a 329-amino-acid chain: G-protein coupled bile acid receptor 1 (329 aa).

Residues 1 to 19 are Extracellular-facing; that stretch reads MTSNSTREVPSPVPAGALG. An N-linked (GlcNAc...) asparagine glycan is attached at Asn-4. Residues 20–40 traverse the membrane as a helical segment; sequence LSLALASLIVAANLLLAVGIA. Over 41–52 the chain is Cytoplasmic; that stretch reads GDRRLRSPPAGC. A helical transmembrane segment spans residues 53 to 73; the sequence is FFLSLLLAGLLTGLALPALPV. The Extracellular portion of the chain corresponds to 74–85; the sequence is LWSQSRRGYWSC. A disulfide bridge links Cys-85 with Cys-155. A helical membrane pass occupies residues 86–106; sequence LFLYLAPNFCFLSLLANLLLV. Over 107 to 125 the chain is Cytoplasmic; sequence HGERYMAVLRPLRPRGSMR. Residues 126–146 traverse the membrane as a helical segment; the sequence is LALLLTWAAPLLFASLPALGW. Over 147 to 165 the chain is Extracellular; that stretch reads NHWAPGGNCSSQAVFPAPY. A glycan (N-linked (GlcNAc...) asparagine) is linked at Asn-154. Residues 166 to 186 form a helical membrane-spanning segment; it reads LYLEIYGLLLPAVGAAALLSV. Residues 187–230 are Cytoplasmic-facing; that stretch reads RVLVTAHRQLQDIRRLERAVCRGAPSALARALTWRQARAQAGAT. The helical transmembrane segment at 231–251 threads the bilayer; the sequence is LLFGLCWGPYVATLLLSVLAF. The Extracellular portion of the chain corresponds to 252 to 261; it reads EQRPPLGPGT. Residues 262–282 traverse the membrane as a helical segment; sequence LLSLISLGSASAAAVPVAMGL. Residues 283 to 329 lie on the Cytoplasmic side of the membrane; it reads GDQRYTGPWRVAAQKWLRMLRGRPQSSPGPSTAYHTSSQSSVDLDLN. The interval 304-329 is disordered; the sequence is GRPQSSPGPSTAYHTSSQSSVDLDLN. Residues 306–329 show a composition bias toward polar residues; sequence PQSSPGPSTAYHTSSQSSVDLDLN.

The protein belongs to the G-protein coupled receptor 1 family.

It is found in the cell membrane. In terms of biological role, receptor for bile acid. Bile acid-binding induces its internalization, activation of extracellular signal-regulated kinase and intracellular cAMP production. May be involved in the suppression of macrophage functions by bile acids. Involved in bile acid promoted GLP1R secretion. The polypeptide is G-protein coupled bile acid receptor 1 (GPBAR1) (Bos taurus (Bovine)).